A 357-amino-acid chain; its full sequence is GDP-mannose transporter 2 (357 aa).

Residues 1 to 43 (MASTRNGISKDELLPTYELQSQRDVENSGSVTSFASKISNNAA) are Cytoplasmic-facing. A helical membrane pass occupies residues 44–64 (AAVLAYCLSSISMTLVNKYVV). The Lumenal portion of the chain corresponds to 65 to 68 (SGAS). Residues 69–89 (WNLSFLYLAIQSFIGTVAIMV) form a helical membrane-spanning segment. Residues 90–107 (CKKAGLIQNLGLFDLKKA) are Cytoplasmic-facing. A helical transmembrane segment spans residues 108 to 128 (QTWLPISLLLVGMIYTGNKAL). Position 129 (Q129) is a topological domain, lumenal. A helical membrane pass occupies residues 130-150 (FLSVPVYTIFKNLTIIVIAYG). The Cytoplasmic portion of the chain corresponds to 151–161 (EVFMVGGSVKP). Residues 162 to 182 (LALLSFGLMVLSSVVAAWADI) form a helical membrane-spanning segment. Residues 183 to 196 (QIATAATAKASSDS) are Lumenal-facing. The chain crosses the membrane as a helical span at residues 197 to 217 (AVATLSALNAGYAWMGTNVVF). Over 218 to 238 (SASYALGMRRVIKKTNFDNWD) the chain is Cytoplasmic. A helical membrane pass occupies residues 239 to 259 (VMFYNNLLSVPILLLSSLLVE). The Lumenal portion of the chain corresponds to 260 to 277 (DWSSENLQRNFPAESRQS). Residues 278 to 298 (LVIGIFYSGVAAIFISYCTAW) form a helical membrane-spanning segment. At 299–306 (CVRATSST) the chain is on the cytoplasmic side. A helical membrane pass occupies residues 307–327 (TYAMVGALNKLPLAVAGIVFF). The Lumenal portion of the chain corresponds to 328–332 (AAPVT). A helical transmembrane segment spans residues 333–352 (FGSVSAIVLGFISGLVYTWA). The Cytoplasmic portion of the chain corresponds to 353-357 (KSTGA).

The protein belongs to the TPT transporter family. SLC35D subfamily. As to quaternary structure, homooligomer.

It localises to the golgi apparatus membrane. The protein resides in the cytoplasmic vesicle membrane. Its subcellular location is the endoplasmic reticulum membrane. Functionally, involved in the import of GDP-mannose from the cytoplasm into the Golgi lumen. The protein is GDP-mannose transporter 2 (gmt2) of Emericella nidulans (strain FGSC A4 / ATCC 38163 / CBS 112.46 / NRRL 194 / M139) (Aspergillus nidulans).